A 334-amino-acid polypeptide reads, in one-letter code: MARDEVRRMLPADIKREVLIKDENAETNPKWGFPPYERPIELHIQYGVINLDKPPGPTSHEVVAWIKRILNLEKAGHGGTLDPKVSGVLPVALEKATRVVQALLPAGKEYVALMHLHGDVPENKIIDVMKEFEGEIIQRPPLRSAVKRRLRTRKVYYIEILEIDGRDVLFKVGVEAGTYIRSLIHHIGLALGVGAHMAELRRTRSGPFKEDETLVTLHDLVDYYHFWKEDGIEKYLRRAIQPMEKAVEHLPKIWIKDSAVAAVAHGANLTVPGIVKLNVGIKRGDLVAIMTLKDELVALGKAMMTSQEMMQRSKGIAVDVEKVFMPRDWYPKLW.

Asp82 functions as the Nucleophile in the catalytic mechanism. One can recognise a PUA domain in the interval 250 to 325; the sequence is LPKIWIKDSA…IAVDVEKVFM (76 aa).

Belongs to the pseudouridine synthase TruB family. Type 2 subfamily.

It catalyses the reaction uridine(55) in tRNA = pseudouridine(55) in tRNA. Its function is as follows. Could be responsible for synthesis of pseudouridine from uracil-55 in the psi GC loop of transfer RNAs. The protein is Probable tRNA pseudouridine synthase B of Pyrococcus horikoshii (strain ATCC 700860 / DSM 12428 / JCM 9974 / NBRC 100139 / OT-3).